Consider the following 433-residue polypeptide: 23S rRNA (uracil(1939)-C(5))-methyltransferase RlmD (433 aa).

Positions 10-68 constitute a TRAM domain; the sequence is RTTTRQIITVSVNDLDSFGQGVARHNGKTLFIPGLLPQENAEVTVTEDKKQYARAKVVR. C81, C87, C90, and C162 together coordinate [4Fe-4S] cluster. S-adenosyl-L-methionine contacts are provided by Q265, F294, N299, E315, N342, and D363. Catalysis depends on C389, which acts as the Nucleophile.

It belongs to the class I-like SAM-binding methyltransferase superfamily. RNA M5U methyltransferase family. RlmD subfamily.

The enzyme catalyses uridine(1939) in 23S rRNA + S-adenosyl-L-methionine = 5-methyluridine(1939) in 23S rRNA + S-adenosyl-L-homocysteine + H(+). Catalyzes the formation of 5-methyl-uridine at position 1939 (m5U1939) in 23S rRNA. The chain is 23S rRNA (uracil(1939)-C(5))-methyltransferase RlmD from Escherichia coli O6:K15:H31 (strain 536 / UPEC).